Consider the following 493-residue polypeptide: Endoglucanase 23 (493 aa).

The first 23 residues, 1–23 (MKASIYLVTVFILLLLLLPTAIP), serve as a signal peptide directing secretion. Residue aspartate 78 is the Nucleophile of the active site. A glycan (N-linked (GlcNAc...) asparagine) is linked at asparagine 297. Histidine 410 is a catalytic residue. N-linked (GlcNAc...) asparagine glycosylation is present at asparagine 465. Glutamate 470 is a catalytic residue.

This sequence belongs to the glycosyl hydrolase 9 (cellulase E) family.

The protein localises to the secreted. The catalysed reaction is Endohydrolysis of (1-&gt;4)-beta-D-glucosidic linkages in cellulose, lichenin and cereal beta-D-glucans.. The chain is Endoglucanase 23 from Arabidopsis thaliana (Mouse-ear cress).